The sequence spans 270 residues: NFAT activation molecule 1 (270 aa).

A signal peptide spans 1–42 (MENQPVRWRALPGLPRPPGLPAAPWLLLGVLLLPGTLRLAGG). The Extracellular portion of the chain corresponds to 43–163 (QSVTHTGLPI…YREPPQSPQK (121 aa)). One can recognise an Ig-like V-type domain in the interval 50–150 (LPIMASLANT…RGSGTFILVR (101 aa)). The cysteines at positions 65 and 114 are disulfide-linked. Asn107 is a glycosylation site (N-linked (GlcNAc...) asparagine). Residues 164–184 (LLLFGFTGLLSVLSVVGTALL) traverse the membrane as a helical segment. Topologically, residues 185–270 (LWNKKRMRGP…GELNLVYENL (86 aa)) are cytoplasmic. A disordered region spans residues 190 to 219 (RMRGPGKDPTRKCPDPRSASSPKQHPSESV). A compositionally biased stretch (basic and acidic residues) spans 194-204 (PGKDPTRKCPD). A compositionally biased stretch (polar residues) spans 207–219 (SASSPKQHPSESV). Residues 209 to 237 (SSPKQHPSESVYTALQRRETEVYACIENE) enclose the ITAM domain. Phosphotyrosine occurs at positions 220 and 231. Positions 234–262 (IENEDGSSPTAKQSPLSQERPHRFEDDGE) are disordered. Residues 239–250 (GSSPTAKQSPLS) show a composition bias toward polar residues.

As to quaternary structure, no direct interaction with the B-cell antigen receptor (BCR). Interacts with SYK; probably involved in BCR signaling. Interacts with ZAP70. N-glycosylated. As to expression, highly expressed in neutrophils, primary monocytes, mast cells, monocytic cell lines and lymphocytes. Also expressed in spleen B and T-cells, and lung. Expressed at low level in non-immune tissue.

The protein resides in the cell membrane. May function in immune system as a receptor which activates via the calcineurin/NFAT-signaling pathway the downstream cytokine gene promoters. Activates the transcription of IL-13 and TNF-alpha promoters. May be involved in the regulation of B-cell, but not T-cell, development. Overexpression activates downstream effectors without ligand binding or antibody cross-linking. In Homo sapiens (Human), this protein is NFAT activation molecule 1 (NFAM1).